Consider the following 203-residue polypeptide: dITP/XTP pyrophosphatase (203 aa).

Residue 7–12 (SGNLHK) coordinates substrate. 2 residues coordinate Mg(2+): E47 and D77. Residue D77 is the Proton acceptor of the active site. Residues S78, 160-163 (FGYD), K183, and 188-189 (HR) each bind substrate.

Belongs to the HAM1 NTPase family. Homodimer. Requires Mg(2+) as cofactor.

It catalyses the reaction XTP + H2O = XMP + diphosphate + H(+). It carries out the reaction dITP + H2O = dIMP + diphosphate + H(+). The enzyme catalyses ITP + H2O = IMP + diphosphate + H(+). Pyrophosphatase that catalyzes the hydrolysis of nucleoside triphosphates to their monophosphate derivatives, with a high preference for the non-canonical purine nucleotides XTP (xanthosine triphosphate), dITP (deoxyinosine triphosphate) and ITP. Seems to function as a house-cleaning enzyme that removes non-canonical purine nucleotides from the nucleotide pool, thus preventing their incorporation into DNA/RNA and avoiding chromosomal lesions. The chain is dITP/XTP pyrophosphatase from Opitutus terrae (strain DSM 11246 / JCM 15787 / PB90-1).